The sequence spans 569 residues: Mitochondrial import receptor subunit tomm-70 (569 aa).

The Mitochondrial intermembrane segment spans residues 1-12 (MVETTGISDQTK). The chain crosses the membrane as a helical span at residues 13–32 (KVLIGVAAAATVAGVGYLVY). Over 33–569 (KSFGGSDLER…KRAAEMLDMY (537 aa)) the chain is Cytoplasmic. 4 TPR repeats span residues 44–77 (LEEI…AGPN), 119–152 (TKAY…DSSL), 221–254 (DQKQ…PPAM), and 510–544 (LHLL…APPR).

It belongs to the Tom70 family. Forms part of the preprotein translocase complex of the outer mitochondrial membrane (TOM complex). In terms of tissue distribution, expressed in body wall muscle cells, the pharynx and structures in the tail.

It localises to the mitochondrion outer membrane. In terms of biological role, receptor that accelerates the import of all mitochondrial precursor proteins. The chain is Mitochondrial import receptor subunit tomm-70 from Caenorhabditis elegans.